The primary structure comprises 38 residues: Bacteriocin BAC79 (38 aa).

With respect to regulation, the antimicrobial activity of BAC79 was completely lost after treatment with enzymes trypsin, pepsin, proteinase-K, and carboxypeptidase, while there was no loss of activity with either amylase or lipase. In terms of biological role, has antibacterial activity against a wide spectrum of Gram-positive and Gram-negative bacteria, including L.monocytogenes which is inhibited through disruption of the cell membrane. This Weissella confusa (Lactobacillus confusus) protein is Bacteriocin BAC79.